Reading from the N-terminus, the 476-residue chain is Adenylyl cyclase-associated protein 2 (476 aa).

The segment at 223–322 is disordered; it reads SILSSGPGLP…KSNSPQKHTP (100 aa). A compositionally biased stretch (pro residues) spans 230 to 247; sequence GLPPPPPPPPPPGPPPPF. The segment covering 288-299 has biased composition (polar residues); that stretch reads KNPSLRAQGQIR. Residues serine 300 and serine 308 each carry the phosphoserine modification. Residues 300 to 317 show a composition bias toward low complexity; the sequence is SPTKTHTPSPTSPKSNSP. Positions 317-454 constitute a C-CAP/cofactor C-like domain; that stretch reads PQKHTPVLEL…QDDDYREFPI (138 aa).

It belongs to the CAP family. Expressed in the heart, skeletal muscle, and brain.

The protein localises to the cell membrane. Involved in the regulation of actin polymerization. This is Adenylyl cyclase-associated protein 2 (Cap2) from Mus musculus (Mouse).